The following is a 243-amino-acid chain: Ubiquinone/menaquinone biosynthesis C-methyltransferase UbiE (243 aa).

Residues threonine 69, aspartate 90, and 116–117 (DA) contribute to the S-adenosyl-L-methionine site.

The protein belongs to the class I-like SAM-binding methyltransferase superfamily. MenG/UbiE family.

The catalysed reaction is a 2-demethylmenaquinol + S-adenosyl-L-methionine = a menaquinol + S-adenosyl-L-homocysteine + H(+). It catalyses the reaction a 2-methoxy-6-(all-trans-polyprenyl)benzene-1,4-diol + S-adenosyl-L-methionine = a 5-methoxy-2-methyl-3-(all-trans-polyprenyl)benzene-1,4-diol + S-adenosyl-L-homocysteine + H(+). Its pathway is quinol/quinone metabolism; menaquinone biosynthesis; menaquinol from 1,4-dihydroxy-2-naphthoate: step 2/2. The protein operates within cofactor biosynthesis; ubiquinone biosynthesis. Methyltransferase required for the conversion of demethylmenaquinol (DMKH2) to menaquinol (MKH2) and the conversion of 2-polyprenyl-6-methoxy-1,4-benzoquinol (DDMQH2) to 2-polyprenyl-3-methyl-6-methoxy-1,4-benzoquinol (DMQH2). This Burkholderia vietnamiensis (strain G4 / LMG 22486) (Burkholderia cepacia (strain R1808)) protein is Ubiquinone/menaquinone biosynthesis C-methyltransferase UbiE.